We begin with the raw amino-acid sequence, 123 residues long: Defensin beta 118 (123 aa).

A signal peptide spans 1–19; it reads MKLLLLALPMLVLLPQVIP. Disulfide bonds link cysteine 27-cysteine 54, cysteine 34-cysteine 48, and cysteine 38-cysteine 55. The propeptide occupies 65 to 123; it reads VPATSPTPLSDSTPGIIDDILTVRFTTDYFEVSSKKDMVEESEAGRGTETSLPNVHHSS. Basic and acidic residues predominate over residues 100 to 110; the sequence is KDMVEESEAGR. The tract at residues 100–123 is disordered; it reads KDMVEESEAGRGTETSLPNVHHSS. Residues 112 to 123 are compositionally biased toward polar residues; the sequence is TETSLPNVHHSS.

It belongs to the beta-defensin family. The three-dimensional structure formed by the three intramolecular disulfide bridges is indispensable for antimicrobial activity. High-level and epididymis-specific expression. Most abundant in the epithelium of the caput and present in the epididymis lumen and bound to sperm. Also expressed in pancreas.

The protein localises to the secreted. In terms of biological role, host defense peptide that exhibits antimicrobial activity against both Gram-negative bacteria, such as E.coli and S.typhimurium, and Gram-positive bacteria, such as S.aureus and B.subtilis. Inhibits cell adhesion of E.coli on intestinal epithelial enterocytes. Causes rapid permeabilization of both the outer and inner membrane of E.coli, leading to morphological alterations on the bacterial surface. Binds to bacterial lipopolysaccharides (LPS) with high affinity, and may thereby be involved in immunoregulation through LPS neutralization. May contribute to epididymal innate immunity and protect the sperm against attack by microorganisms. The protein is Defensin beta 118 (DEFB118) of Homo sapiens (Human).